We begin with the raw amino-acid sequence, 220 residues long: Putative O-methyltransferase Mjls_4009 (220 aa).

Residues valine 47, glutamate 69, 71–72 (GT), serine 77, aspartate 95, and valine 96 contribute to the S-adenosyl-L-methionine site. Substrate is bound at residue aspartate 143. Aspartate 145 is a binding site for S-adenosyl-L-methionine.

This sequence belongs to the class I-like SAM-binding methyltransferase superfamily. Cation-dependent O-methyltransferase family.

This is Putative O-methyltransferase Mjls_4009 from Mycobacterium sp. (strain JLS).